A 1290-amino-acid polypeptide reads, in one-letter code: Vacuolating cytotoxin autotransporter (1290 aa).

An N-terminal signal peptide occupies residues 1–33; that stretch reads MEIQQTHRKINRPLVSLALVGALVSITPQQSHA. Positions 326-374 are disordered; it reads PPEGGYKDKPKDKPSNTTQNNANNNQQNSAQNNSNTQVINPPNSAQKTE. A compositionally biased stretch (basic and acidic residues) spans 330 to 339; sequence GYKDKPKDKP. Residues 340–362 are compositionally biased toward low complexity; sequence SNTTQNNANNNQQNSAQNNSNTQ. A compositionally biased stretch (polar residues) spans 363–374; sequence VINPPNSAQKTE. The 273-residue stretch at 1018 to 1290 folds into the Autotransporter domain; sequence KYEKPTNVWA…ASNLGMRYSF (273 aa).

Its subcellular location is the periplasm. It is found in the secreted. The protein resides in the cell surface. The protein localises to the cell outer membrane. Its function is as follows. Induces vacuolation of eukaryotic cells. Causes ulceration and gastric lesions. In Helicobacter pylori (strain ATCC 700392 / 26695) (Campylobacter pylori), this protein is Vacuolating cytotoxin autotransporter (vacA).